The chain runs to 144 residues: C-type isolectin Sp-CL4 (144 aa).

The region spanning 27 to 144 (DENRKVKYFE…CSEKLPFMCA (118 aa)) is the C-type lectin domain. Intrachain disulfides connect C48–C143 and C119–C135.

The protein belongs to the true venom lectin family. Post-translationally, glycosylated with a carbohydrate of 383 Da. As to expression, expressed by the venom gland.

Its subcellular location is the secreted. Its function is as follows. The role of this hemagglutinin in the venom is unknown, because it is masked by the high venom hemolytic activity. Lectin with specificity to galactose. Induces hemagglutination. The polypeptide is C-type isolectin Sp-CL4 (Scorpaena plumieri (Spotted scorpionfish)).